Consider the following 182-residue polypeptide: MQNLLPSKVFFTRGIGRGRTELQSFENALRSAGIAQFNIVSVSSILPPRAEIISKDDGLKLLNPGQILFTVLARNSSNELNRMISSAIGYAVPSDRDHWGYLSEHHAYGETENEAGYFAEELAARMLASTMGLEEELKWDDTRKEYVLENKILTTRNIASTTVVLKKDEWTTVVAAAVLIIM.

Residue serine 44 is modified to Pyruvic acid (Ser).

The protein belongs to the PdaD family. Pyruvate serves as cofactor.

It carries out the reaction L-arginine + H(+) = agmatine + CO2. The sequence is that of Pyruvoyl-dependent arginine decarboxylase from Picrophilus torridus (strain ATCC 700027 / DSM 9790 / JCM 10055 / NBRC 100828 / KAW 2/3).